Consider the following 1047-residue polypeptide: Protein masquerade (1047 aa).

The N-terminal stretch at 1-30 (MPRHSSTMSRLVLPLIFSILLVSKPSPSQA) is a signal peptide. The tract at residues 54-87 (KDCPGVCVHTLATLICYEVLDDVACPSPSMKCCI) is CLIP 1. Intrachain disulfides connect C56-C85, C60-C78, and C69-C86. A glycan (N-linked (GlcNAc...) asparagine) is linked at N95. Composition is skewed to low complexity over residues 98–139 (AVRA…STTP) and 148–175 (KRPA…VATA). Residues 98 to 189 (AVRATTTPKT…KEEATKADDA (92 aa)) are disordered. Over residues 176–189 (KPKDKEEATKADDA) the composition is skewed to basic and acidic residues. The interval 192–224 (DCTGVCVADRIAEYCEAYLTSDGLCKEGTKCCV) is CLIP 2. Cystine bridges form between C193–C222, C197–C216, and C206–C223. A glycan (N-linked (GlcNAc...) asparagine) is linked at N251. A disordered region spans residues 252-335 (QTLSEKSAPA…PLSNKLKSGQ (84 aa)). A compositionally biased stretch (low complexity) spans 263–280 (SSSTSTTSTTTTTSTTTT). Residue N287 is glycosylated (N-linked (GlcNAc...) asparagine). The segment covering 307-325 (AAEEEEEQETEEDGEEEEP) has biased composition (acidic residues). The CLIP 3 stretch occupies residues 343-374 (ECEGECMNGIFAIFCDDIDSDAFCPGEESCCV). Intrachain disulfides connect C344/C372, C348/C366, and C357/C373. The interval 376–428 (GGASEATPSSKAPPTKPAIKHAPKPAAKPARPASPPPAPPSSTSGGGGGGDFL) is disordered. The tract at residues 457 to 492 (RCPGFCLLNIMAAFCERPSVLVSTPTTCAKGSVCCD) is CLIP 4. Disulfide bonds link C458/C490, C462/C484, and C471/C491. The disordered stretch occupies residues 498–527 (APKPKLPPPTPSPTASPTAPPYVLPNTPSP). Residues 501–527 (PKLPPPTPSPTASPTAPPYVLPNTPSP) are compositionally biased toward pro residues. The interval 532-567 (ECPGSCIVSLLSFTCFKNAEMTDLFRCKRSGQICCA) is CLIP 5. 3 cysteine pairs are disulfide-bonded: C533/C565, C537/C558, and C546/C566. N582 carries N-linked (GlcNAc...) asparagine glycosylation. Residues 583–673 (DTAYYPAPPP…TTTTTTTTPR (91 aa)) form a disordered region. Composition is skewed to pro residues over residues 588–606 (PAPP…PQTP), 613–638 (NPPP…PPAP), and 650–661 (GLPPQPQPPMTT). Low complexity predominate over residues 662–672 (PPTTTTTTTTP). 5 disulfide bridges follow: C682–C916, C829–C845, C930–C1001, C961–C981, and C991–C1019. N-linked (GlcNAc...) asparagine glycosylation is found at N726 and N794. The interval 803 to 1043 (VVGGEDGENG…FIGWINQIIS (241 aa)) is peptidase S1.

Belongs to the peptidase S1 family. CLIP subfamily. In terms of processing, proteolytically cleaved and thereafter secreted.

Its subcellular location is the secreted. The protein resides in the cell projection. It localises to the axon. In embryogenesis, has a role in somatic muscle attachment and in the development of axonal pathways probably by stabilizing cell-matrix adhesion and/or by acting as a competitive antagonist of serine proteases. The polypeptide is Protein masquerade (Drosophila melanogaster (Fruit fly)).